The sequence spans 258 residues: 5'-nucleotidase SurE (258 aa).

Positions 9, 10, 42, and 96 each coordinate a divalent metal cation.

It belongs to the SurE nucleotidase family. It depends on a divalent metal cation as a cofactor.

The protein resides in the cytoplasm. It catalyses the reaction a ribonucleoside 5'-phosphate + H2O = a ribonucleoside + phosphate. Its function is as follows. Nucleotidase that shows phosphatase activity on nucleoside 5'-monophosphates. The protein is 5'-nucleotidase SurE of Campylobacter jejuni subsp. jejuni serotype O:6 (strain 81116 / NCTC 11828).